Consider the following 349-residue polypeptide: Leukotriene B4 receptor 1 (349 aa).

Residues 1–19 (MNTTSPAAPSSSGVSFISL) lie on the Extracellular side of the membrane. N-linked (GlcNAc...) asparagine glycosylation is present at Asn-2. Residues 20–42 (LVIIVLSVALAVGLPGNSFVVWS) form a helical membrane-spanning segment. The Cytoplasmic portion of the chain corresponds to 43–54 (ILAKLRKRSVTA). The chain crosses the membrane as a helical span at residues 55 to 75 (LMVLHLALADLAVLLTAPFFL). The Extracellular portion of the chain corresponds to 76 to 91 (YSVAQGTWTFGLSSCR). The helical transmembrane segment at 92-113 (LFHYVCGVSMYASVLLIMTMSL) threads the bilayer. The Cytoplasmic segment spans residues 114–138 (DRSLAVALPFVSQKLRTKAVAWRVL). Residues 139–159 (AGIWVMSVLLATPVLLYRTVH) form a helical membrane-spanning segment. Residues 160–179 (LGLNNRSLTCFLKYPSERHR) lie on the Extracellular side of the membrane. N-linked (GlcNAc...) asparagine glycosylation is present at Asn-164. The chain crosses the membrane as a helical span at residues 180–200 (AFHLFFEVITGFLLPFLVVVA). Over 201 to 222 (SYCDIGRRLRARRFRRSRRTGR) the chain is Cytoplasmic. A helical membrane pass occupies residues 223–243 (LVALIILAFAAFWLPYHVVNL). At 244–269 (AEGFRAAAGKALGSGPVGRRLLLARH) the chain is on the extracellular side. A helical transmembrane segment spans residues 270 to 290 (VLITLAFLSSSVNPLLYACAG). Over 291-349 (GGLLRSAGVGFIAKLLEGTGSETSSSRRKGTLAQTLRGTPASPEPDPAESLTASTNPLE) the chain is Cytoplasmic. A disordered region spans residues 311-349 (SETSSSRRKGTLAQTLRGTPASPEPDPAESLTASTNPLE).

The protein belongs to the G-protein coupled receptor 1 family. In terms of processing, phosphorylated by GRK6 upon leukotriene B4 binding; which promotes desensitization.

Its subcellular location is the cell membrane. Its function is as follows. Receptor for extracellular ATP &gt; UTP and ADP. The activity of this receptor is mediated by G proteins which activate a phosphatidylinositol-calcium second messenger system. May be the cardiac P2Y receptor involved in the regulation of cardiac muscle contraction through modulation of L-type calcium currents. Is a receptor for leukotriene B4, a potent chemoattractant involved in inflammation and immune response. The polypeptide is Leukotriene B4 receptor 1 (LTB4R) (Bos taurus (Bovine)).